The primary structure comprises 318 residues: Deoxyhypusine hydroxylase (318 aa).

HEAT-like PBS-type repeat units follow at residues 70–96 and 103–129; these read LKHE…VLEN and VRHE…YFKE. Residues His72, Glu73, His105, Glu106, His231, Glu232, His264, and Glu265 each contribute to the Fe cation site. One copy of the HEAT-like PBS-type 3 repeat lies at 262–288; the sequence is VRHEAAEALGSIATDECLPVLQSFLND.

It belongs to the deoxyhypusine hydroxylase family. It depends on Fe(2+) as a cofactor.

It is found in the cytoplasm. It localises to the nucleus. It catalyses the reaction [eIF5A protein]-deoxyhypusine + AH2 + O2 = [eIF5A protein]-hypusine + A + H2O. It functions in the pathway protein modification; eIF5A hypusination. In terms of biological role, catalyzes the hydroxylation of the N(6)-(4-aminobutyl)-L-lysine intermediate to form hypusine, an essential post-translational modification only found in mature eIF-5A factor. The protein is Deoxyhypusine hydroxylase of Candida albicans (strain SC5314 / ATCC MYA-2876) (Yeast).